The following is a 113-amino-acid chain: Hydrogenase maturation factor HypA 2 (113 aa).

H2 provides a ligand contact to Ni(2+). C73, C76, C89, and C92 together coordinate Zn(2+).

It belongs to the HypA/HybF family.

Its function is as follows. Involved in the maturation of [NiFe] hydrogenases. Required for nickel insertion into the metal center of the hydrogenase. The chain is Hydrogenase maturation factor HypA 2 from Bradyrhizobium diazoefficiens (strain JCM 10833 / BCRC 13528 / IAM 13628 / NBRC 14792 / USDA 110).